Consider the following 424-residue polypeptide: Probable aminotransferase TAT4 (424 aa).

The protein belongs to the class-I pyridoxal-phosphate-dependent aminotransferase family. It depends on pyridoxal 5'-phosphate as a cofactor.

This chain is Probable aminotransferase TAT4, found in Arabidopsis thaliana (Mouse-ear cress).